Here is a 392-residue protein sequence, read N- to C-terminus: L-rhamnonate dehydratase (392 aa).

Substrate-binding residues include H22 and R48. Residues D214, E240, and E268 each contribute to the Mg(2+) site. The active-site Proton acceptor is H318. E338 contacts substrate.

This sequence belongs to the mandelate racemase/muconate lactonizing enzyme family. RhamD subfamily. In terms of assembly, homooctamer; tetramer of dimers. The cofactor is Mg(2+).

It carries out the reaction L-rhamnonate = 2-dehydro-3-deoxy-L-rhamnonate + H2O. Functionally, catalyzes the dehydration of L-rhamnonate to 2-keto-3-deoxy-L-rhamnonate (KDR). The polypeptide is L-rhamnonate dehydratase (Burkholderia ambifaria (strain MC40-6)).